A 397-amino-acid polypeptide reads, in one-letter code: Putative nickel insertion protein (397 aa).

The protein belongs to the LarC family.

In Synechococcus sp. (strain JA-2-3B'a(2-13)) (Cyanobacteria bacterium Yellowstone B-Prime), this protein is Putative nickel insertion protein.